We begin with the raw amino-acid sequence, 465 residues long: Serine/threonine-protein kinase 38 (465 aa).

An N-acetylalanine modification is found at A2. The tract at residues 62–87 (KRLRRSAHARKETEFLRLKRTRLGLE) is interaction with S100B. At T74 the chain carries Phosphothreonine. The region spanning 89 to 382 (FESLKVIGRG…VEEIKNNSFF (294 aa)) is the Protein kinase domain. Residues 95 to 103 (IGRGAFGEV) and K118 contribute to the ATP site. Catalysis depends on D212, which acts as the Proton acceptor. The residue at position 264 (S264) is a Phosphoserine. S281 carries the post-translational modification Phosphoserine; by autocatalysis. The short motif at 306–311 (WSLGVI) is the UFM1-interacting motif (UFIM) element. An AGC-kinase C-terminal domain is found at 383 to 455 (EGVDWEHIRE…KRFEGLTARG (73 aa)). At T444 the chain carries Phosphothreonine; by STK24/MST3.

It belongs to the protein kinase superfamily. AGC Ser/Thr protein kinase family. Homodimeric S100B binds two molecules of STK38. Interacts with MOB1 and MOB2. Interacts with MAP3K1 and MAP3K2 (via the kinase domain). Forms a tripartite complex with MOBKL1B and STK3/MST2. Interacts with MICAL1; leading to inhibit the protein kinase activity by antagonizing activation by MST1/STK4. Mg(2+) serves as cofactor. Post-translationally, ISGylated. Phosphorylated by STK3/MST2 and this is enhanced by MOBKL1B.

The protein localises to the nucleus. The protein resides in the cytoplasm. Its subcellular location is the chromosome. It catalyses the reaction L-seryl-[protein] + ATP = O-phospho-L-seryl-[protein] + ADP + H(+). The enzyme catalyses L-threonyl-[protein] + ATP = O-phospho-L-threonyl-[protein] + ADP + H(+). With respect to regulation, activated by binding of S100B which releases autoinhibitory N-lobe interactions, enabling ATP to bind and the autophosphorylation of Ser-281. Thr-444 then undergoes calcium-dependent phosphorylation by STK24/MST3. Interactions between phosphorylated Thr-444 and the N-lobe promote additional structural changes that complete the activation of the kinase. Autoinhibition is also released by the binding of MOB1/MOBKL1A and MOB2/HCCA2 to the N-terminal of STK38. Its function is as follows. Serine/threonine-protein kinase that acts as a negative regulator of MAP3K1/2 signaling. Converts MAP3K2 from its phosphorylated form to its non-phosphorylated form and inhibits autophosphorylation of MAP3K2. Acts as an ufmylation 'reader' in a kinase-independent manner: specifically recognizes and binds mono-ufmylated histone H4 in response to DNA damage, promoting the recruitment of SUV39H1 to the double-strand breaks, resulting in ATM activation. The polypeptide is Serine/threonine-protein kinase 38 (STK38) (Bos taurus (Bovine)).